The primary structure comprises 449 residues: Probable glycine dehydrogenase (decarboxylating) subunit 1 (449 aa).

Belongs to the GcvP family. N-terminal subunit subfamily. The glycine cleavage system is composed of four proteins: P, T, L and H. In this organism, the P 'protein' is a heterodimer of two subunits.

It catalyses the reaction N(6)-[(R)-lipoyl]-L-lysyl-[glycine-cleavage complex H protein] + glycine + H(+) = N(6)-[(R)-S(8)-aminomethyldihydrolipoyl]-L-lysyl-[glycine-cleavage complex H protein] + CO2. The glycine cleavage system catalyzes the degradation of glycine. The P protein binds the alpha-amino group of glycine through its pyridoxal phosphate cofactor; CO(2) is released and the remaining methylamine moiety is then transferred to the lipoamide cofactor of the H protein. This is Probable glycine dehydrogenase (decarboxylating) subunit 1 from Sulfurisphaera tokodaii (strain DSM 16993 / JCM 10545 / NBRC 100140 / 7) (Sulfolobus tokodaii).